The sequence spans 499 residues: Glycerol kinase (499 aa).

Residue threonine 17 participates in ADP binding. ATP-binding residues include threonine 17, threonine 18, and serine 19. Residue threonine 17 participates in sn-glycerol 3-phosphate binding. An ADP-binding site is contributed by arginine 21. The sn-glycerol 3-phosphate site is built by arginine 87, glutamate 88, tyrosine 139, and aspartate 243. Positions 87, 88, 139, 243, and 244 each coordinate glycerol. Residues threonine 265 and glycine 308 each coordinate ADP. Positions 265, 308, 312, and 409 each coordinate ATP. Glycine 409 and asparagine 413 together coordinate ADP.

It belongs to the FGGY kinase family.

The enzyme catalyses glycerol + ATP = sn-glycerol 3-phosphate + ADP + H(+). It participates in polyol metabolism; glycerol degradation via glycerol kinase pathway; sn-glycerol 3-phosphate from glycerol: step 1/1. With respect to regulation, inhibited by fructose 1,6-bisphosphate (FBP). Its function is as follows. Key enzyme in the regulation of glycerol uptake and metabolism. Catalyzes the phosphorylation of glycerol to yield sn-glycerol 3-phosphate. In Pseudomonas putida (strain ATCC 700007 / DSM 6899 / JCM 31910 / BCRC 17059 / LMG 24140 / F1), this protein is Glycerol kinase.